A 223-amino-acid polypeptide reads, in one-letter code: PKHD-type hydroxylase syc1482_d (223 aa).

The 99-residue stretch at 78 to 176 (RVHSLLFSRY…RFACVGWVQS (99 aa)) folds into the Fe2OG dioxygenase domain. Residues His-96, Asp-98, and His-157 each coordinate Fe cation. Position 167 (Arg-167) interacts with 2-oxoglutarate.

The cofactor is Fe(2+). L-ascorbate is required as a cofactor.

The polypeptide is PKHD-type hydroxylase syc1482_d (Synechococcus sp. (strain ATCC 27144 / PCC 6301 / SAUG 1402/1) (Anacystis nidulans)).